The chain runs to 529 residues: NAD(P)H-quinone oxidoreductase chain 4 1 (529 aa).

13 helical membrane-spanning segments follow: residues 4 to 24, 36 to 56, 91 to 111, 115 to 135, 137 to 157, 169 to 189, 209 to 229, 243 to 263, 277 to 297, 314 to 334, 335 to 355, 387 to 407, and 417 to 437; these read FPWLTTIILFPIVAALAIPFI, WYALAVGLIDFALIVYAFTNF, LILLTGFITTLAILAAWPVTL, LFYFLMLAMYGGQIAVFAVQD, LVFFLAWELELIPVYLLLAIW, FILYTAGSSLFILVAGLAMAF, GFQLLVYAGFLVAYGVKLPIV, TAPVHMLLAGILLKMGGYALI, FAPVLVILGVVNIIYAALTSY, IGFVLIGIASFTNLGMSGAVL, QMVSHGLIGASLFFLVGATYD, LALPGMSGFVAELMVFIGFAT, and VIVVFLAAVGVILTPIYLLSM.

It belongs to the complex I subunit 4 family.

It is found in the cellular thylakoid membrane. The enzyme catalyses a plastoquinone + NADH + (n+1) H(+)(in) = a plastoquinol + NAD(+) + n H(+)(out). The catalysed reaction is a plastoquinone + NADPH + (n+1) H(+)(in) = a plastoquinol + NADP(+) + n H(+)(out). Functionally, NDH-1 shuttles electrons from NAD(P)H, via FMN and iron-sulfur (Fe-S) centers, to quinones in the respiratory chain. The immediate electron acceptor for the enzyme in this species is believed to be plastoquinone. Couples the redox reaction to proton translocation (for every two electrons transferred, four hydrogen ions are translocated across the cytoplasmic membrane), and thus conserves the redox energy in a proton gradient. This chain is NAD(P)H-quinone oxidoreductase chain 4 1, found in Thermosynechococcus vestitus (strain NIES-2133 / IAM M-273 / BP-1).